A 593-amino-acid chain; its full sequence is MRSHYCGDVNKSHVGQEVTLVGWVNRSRDLGGVVFLDMRDREGIVQVVYDPDLPEVFEVASSLRSEFCVQIKGLVRARPDSQVNADMRTGEIEILGLELTVLNSSAPLPINMDKNQHNTEEQRLKYRYLDLRRPEMADRIVFRSKVTSAVRRFLDGNGFLDIETPILTKATPEGARDYLVPSRTYKGQFFALPQSPQLFKQLLMMSGFDRYYQIVKCFRDEDLRADRQPEFTQIDIETSFMTSEQVMAKTEEMTRGLFKELLDVDLGEFPRMTFAEAMRRYGSDKPDLRNPLELIDIADLVKEVEFAVFNGPANDPEGRVAVLSIPGGAKLSRKQLDEYAKYVTIYGAKGLAWMKVNDLDKGMEGIQSPVLKFLTEDVVKALLERTGAQTGDVILFGADKANVVAEAMGALRLKAGEDFDLLKGDWKPLWVVDFPMFERTSDGGLHAMHHPFTAPSNMTPAELEANPTAAISDAYDMVLNGCELGGGSVRIHNSEMQSAVFRILGINDEEANEKFGFLLEALRYGTPPHAGLAFGLDRIIMLMTGASSIRDVMAFPKTTTAACPLTNAPGFANPVQLVELGVSVIEPEVKDGE.

Residue Glu173 participates in L-aspartate binding. Residues Gln197–Lys200 form an aspartate region. Arg219 lines the L-aspartate pocket. Residues Arg219 to Glu221 and Gln228 each bind ATP. His449 contributes to the L-aspartate binding site. Glu483 contacts ATP. Arg490 is an L-aspartate binding site. Gly535–Arg538 contributes to the ATP binding site.

Belongs to the class-II aminoacyl-tRNA synthetase family. Type 1 subfamily. As to quaternary structure, homodimer.

It is found in the cytoplasm. The enzyme catalyses tRNA(Asp) + L-aspartate + ATP = L-aspartyl-tRNA(Asp) + AMP + diphosphate. Functionally, catalyzes the attachment of L-aspartate to tRNA(Asp) in a two-step reaction: L-aspartate is first activated by ATP to form Asp-AMP and then transferred to the acceptor end of tRNA(Asp). The polypeptide is Aspartate--tRNA ligase (Shewanella piezotolerans (strain WP3 / JCM 13877)).